Here is a 312-residue protein sequence, read N- to C-terminus: Ribosomal protein L11 methyltransferase (312 aa).

The S-adenosyl-L-methionine site is built by T162, G183, D205, and N248.

It belongs to the methyltransferase superfamily. PrmA family.

Its subcellular location is the cytoplasm. The catalysed reaction is L-lysyl-[protein] + 3 S-adenosyl-L-methionine = N(6),N(6),N(6)-trimethyl-L-lysyl-[protein] + 3 S-adenosyl-L-homocysteine + 3 H(+). Functionally, methylates ribosomal protein L11. In Bacillus cereus (strain Q1), this protein is Ribosomal protein L11 methyltransferase.